The chain runs to 121 residues: Two-component response regulator ORR8 (121 aa).

The 117-residue stretch at 5 to 121 (HVLVVDDTHV…VDVPRIMKYI (117 aa)) folds into the Response regulatory domain. A 4-aspartylphosphate modification is found at Asp55.

It belongs to the ARR family. Type-A subfamily. Post-translationally, two-component system major event consists of a His-to-Asp phosphorelay between a sensor histidine kinase (HK) and a response regulator (RR). In plants, the His-to-Asp phosphorelay involves an additional intermediate named Histidine-containing phosphotransfer protein (HPt). This multistep phosphorelay consists of a His-Asp-His-Asp sequential transfer of a phosphate group between first a His and an Asp of the HK protein, followed by the transfer to a conserved His of the HPt protein and finally the transfer to an Asp in the receiver domain of the RR protein. Expressed in mature leaves, and at low levels in roots, shoots and flowers.

In terms of biological role, functions as a response regulator involved in His-to-Asp phosphorelay signal transduction system. Phosphorylation of the Asp residue in the receiver domain activates the ability of the protein to promote the transcription of target genes. Type-A response regulators seem to act as negative regulators of the cytokinin signaling. This is Two-component response regulator ORR8 from Oryza sativa subsp. indica (Rice).